Consider the following 208-residue polypeptide: Attacin-A (208 aa).

The first 20 residues, M1 to G20, serve as a signal peptide directing secretion. The propeptide occupies Q21 to P47.

Hemolymph and fat body.

It is found in the secreted. Hemolymph antibacterial protein against Gram-negative bacteria. The sequence is that of Attacin-A from Glossina morsitans morsitans (Savannah tsetse fly).